Reading from the N-terminus, the 205-residue chain is MKLDVIKLDGEAAGSVELDEALFGLEPRADILHRVVRWQRNKAQAGTHKVKTRSEVSYSTKKIYRQKGTGGARHGARSAPIFRKGGIYKGPTPRSHAHDLPKKFRKLGLKHALSAKAKAGELVVIDMATSEGKTATLAKQIKNLGWKRALVIDGAQVDAGFAKAAANIDTLDVLPSMGANVYDILKRDTLVLTKAGVEALEARLK.

Belongs to the universal ribosomal protein uL4 family. In terms of assembly, part of the 50S ribosomal subunit.

Its function is as follows. One of the primary rRNA binding proteins, this protein initially binds near the 5'-end of the 23S rRNA. It is important during the early stages of 50S assembly. It makes multiple contacts with different domains of the 23S rRNA in the assembled 50S subunit and ribosome. In terms of biological role, forms part of the polypeptide exit tunnel. The polypeptide is Large ribosomal subunit protein uL4 (Dinoroseobacter shibae (strain DSM 16493 / NCIMB 14021 / DFL 12)).